We begin with the raw amino-acid sequence, 51 residues long: Large ribosomal subunit protein bL33 (51 aa).

This sequence belongs to the bacterial ribosomal protein bL33 family. In terms of assembly, part of the 50S ribosomal subunit. Cross-links to the P and E site tRNAs.

This chain is Large ribosomal subunit protein bL33, found in Pseudomonas aeruginosa (strain ATCC 15692 / DSM 22644 / CIP 104116 / JCM 14847 / LMG 12228 / 1C / PRS 101 / PAO1).